Consider the following 788-residue polypeptide: Ribonucleoside-diphosphate reductase subunit alpha (788 aa).

The 91-residue stretch at 2–92 (ITVVKRNGRI…LYDLYHKVSG (91 aa)) folds into the ATP-cone domain. Residues Lys6, 12 to 18 (EPLDITK), and Thr52 each bind ATP. Residue Thr200 participates in GDP binding. Residues Cys216 and Cys497 are joined by a disulfide bond. DTTP contacts are provided by residues 223-225 (DNI) and Arg253. Asn424 is a GDP binding site. The Proton acceptor role is filled by Asn424. The active-site Cysteine radical intermediate is the Cys426. GDP-binding positions include Glu428 and 661-663 (SSI). Catalysis depends on Glu428, which acts as the Proton acceptor.

Belongs to the ribonucleoside diphosphate reductase large chain family. As to quaternary structure, tetramer of two alpha and two beta subunits.

The catalysed reaction is a 2'-deoxyribonucleoside 5'-diphosphate + [thioredoxin]-disulfide + H2O = a ribonucleoside 5'-diphosphate + [thioredoxin]-dithiol. Under complex allosteric control mediated by deoxynucleoside triphosphates and ATP binding to separate specificity and activation sites on the alpha subunit. The type of nucleotide bound at the specificity site determines substrate preference. It seems probable that ATP makes the enzyme reduce CDP and UDP, dGTP favors ADP reduction and dTTP favors GDP reduction. Stimulated by ATP and inhibited by dATP binding to the activity site. In terms of biological role, provides the precursors necessary for DNA synthesis. Catalyzes the biosynthesis of deoxyribonucleotides from the corresponding ribonucleotides. In Helicobacter pylori (strain ATCC 700392 / 26695) (Campylobacter pylori), this protein is Ribonucleoside-diphosphate reductase subunit alpha (nrdA).